A 961-amino-acid chain; its full sequence is Glycine dehydrogenase (decarboxylating) (961 aa).

N6-(pyridoxal phosphate)lysine is present on Lys-702.

The protein belongs to the GcvP family. The glycine cleavage system is composed of four proteins: P, T, L and H. Requires pyridoxal 5'-phosphate as cofactor.

It catalyses the reaction N(6)-[(R)-lipoyl]-L-lysyl-[glycine-cleavage complex H protein] + glycine + H(+) = N(6)-[(R)-S(8)-aminomethyldihydrolipoyl]-L-lysyl-[glycine-cleavage complex H protein] + CO2. Functionally, the glycine cleavage system catalyzes the degradation of glycine. The P protein binds the alpha-amino group of glycine through its pyridoxal phosphate cofactor; CO(2) is released and the remaining methylamine moiety is then transferred to the lipoamide cofactor of the H protein. This Rhodopseudomonas palustris (strain BisA53) protein is Glycine dehydrogenase (decarboxylating).